The chain runs to 871 residues: CRISPR system Cmr subunit Cmr2 (871 aa).

A not required for target RNA cleavage region spans residues Met-1 to Ser-215. Mn(2+) is bound by residues His-13, Asp-14, and His-25. Cys-448, Cys-451, Cys-478, and Cys-481 together coordinate Zn(2+). The region spanning Lys-592 to Leu-752 is the GGDEF domain. Mn(2+) contacts are provided by Asp-600, Glu-656, Asp-673, Asp-674, Glu-694, and Glu-700.

This sequence belongs to the CRISPR system Cmr2 family. As to quaternary structure, part of the type III-B Cmr ribonucleoprotein (RNP) complex, an elongated RNP with Cmr2 and Cmr3 as the base, with Cmr4 and Cmr5 forming a helical core along the mature crRNA (39 or 45 nt in length), while the complex is capped by Cmr6 and Cmr1. The 5' end of the crRNA is bound to Cmr2 and Cmr3, while Cmr6 and a Cmr1 subunit (Cmr1-1 or Cmr1-2) cap the 3' end of the crRNA. The target RNA lies antiparallel to the crRNA, with its 5' end near Cmr1 and Cmr6 and its 3' end near Cmr2 and Cmr3; major target cleavage occurs nears the junction of Cmr1/Cmr6 and Cmr4/Cmr, with minor cleavage occurring at 6 nt intervals which coincide with the proposed spacing of Cmr4 subunits. Forms a 1:1 complex with Cmr3. The Cmr2-Cmr3 complex non-specifically binds ss-target RNA and crRNA. Interacts with Cmr3, Cmr4 and Cmr5. The cofactor is Ca(2+). It depends on Mn(2+) as a cofactor. Zn(2+) serves as cofactor.

The protein resides in the cytoplasm. Functionally, CRISPR (clustered regularly interspaced short palindromic repeat), is an adaptive immune system that provides protection against mobile genetic elements (viruses, transposable elements and conjugative plasmids). CRISPR clusters contain sequences complementary to antecedent mobile elements and target invading nucleic acids. CRISPR clusters are transcribed and processed into CRISPR RNA (crRNA), formerly called psiRNA (prokaryotic silencing) in this organism. Part of the Cmr ribonucleoprotein complex which has divalent cation-dependent endoribonuclease activity specific for ssRNA complementary to the crRNA (target RNA), generating 5' hydroxy- and 3' phosphate or 2'-3' cyclic phosphate termini. Cmr4 is probably the subunit that cleaves target RNA. Cmr complex does not cleave ssDNA complementary to the crRNA. Cleavage of target RNA is guided by the crRNA; substrate cleavage occurs a fixed distance (14 nt) from the 3' end of the crRNA. In vitro reconstitution shows Cmr1-2 and Cmr5 are not absolutely necessary for target cleavage. This chain is CRISPR system Cmr subunit Cmr2, found in Pyrococcus furiosus (strain ATCC 43587 / DSM 3638 / JCM 8422 / Vc1).